A 59-amino-acid polypeptide reads, in one-letter code: MNMYWFLGALLYFLIGTYIFIRVTRDSQSGSWILLALAAPLIIAGYPYFYSKKLLSKRR.

2 helical membrane passes run 1–21 (MNMY…YIFI) and 30–50 (GSWI…PYFY).

It is found in the cell membrane. This is an uncharacterized protein from Bacillus subtilis (strain 168).